Here is a 289-residue protein sequence, read N- to C-terminus: Agroclavine dehydrogenase (289 aa).

This sequence belongs to the fgaFS/easG family. Monomer.

It catalyses the reaction agroclavine + NADP(+) = didehydroagroclavine + NADPH + H(+). It functions in the pathway alkaloid biosynthesis; ergot alkaloid biosynthesis. Agroclavine dehydrogenase; part of the gene cluster that mediates the biosynthesis of fungal ergot alkaloid ergovaline, the predominant ergopeptine product in E.festucae var. lolii. DmaW catalyzes the first step of ergot alkaloid biosynthesis by condensing dimethylallyl diphosphate (DMAP) and tryptophan to form 4-dimethylallyl-L-tryptophan. The second step is catalyzed by the methyltransferase easF that methylates 4-dimethylallyl-L-tryptophan in the presence of S-adenosyl-L-methionine, resulting in the formation of 4-dimethylallyl-L-abrine. The catalase easC and the FAD-dependent oxidoreductase easE then transform 4-dimethylallyl-L-abrine to chanoclavine-I which is further oxidized by easD in the presence of NAD(+), resulting in the formation of chanoclavine-I aldehyde. Agroclavine dehydrogenase easG then mediates the conversion of chanoclavine-I aldehyde to agroclavine via a non-enzymatic adduct reaction: the substrate is an iminium intermediate that is formed spontaneously from chanoclavine-I aldehyde in the presence of glutathione. Further conversion of agroclavine to paspalic acid is a two-step process involving oxidation of agroclavine to elymoclavine and of elymoclavine to paspalic acid, the second step being performed by the elymoclavine oxidase cloA. However, cloA does not encode a functional enzyme indicating that C.fusiformis terminates its ergot alkaloid pathway at elymoclavine. The sequence is that of Agroclavine dehydrogenase from Claviceps fusiformis (Ergot fungus).